Reading from the N-terminus, the 97-residue chain is DNA-binding protein HU (97 aa).

Belongs to the bacterial histone-like protein family. In terms of assembly, has been isolated in complexes with 5S rRNA and bL25, and with 5S rRNA, bL25 and uL5. Homodimer.

Functionally, histone-like DNA-binding protein which is capable of wrapping DNA to stabilize it, and thus to prevent its denaturation under extreme environmental conditions. This Thermus thermophilus (strain ATCC 27634 / DSM 579 / HB8) protein is DNA-binding protein HU.